The chain runs to 134 residues: Small ribosomal subunit protein uS8c (134 aa).

This sequence belongs to the universal ribosomal protein uS8 family. As to quaternary structure, part of the 30S ribosomal subunit.

It is found in the plastid. The protein resides in the chloroplast. In terms of biological role, one of the primary rRNA binding proteins, it binds directly to 16S rRNA central domain where it helps coordinate assembly of the platform of the 30S subunit. This Capsella bursa-pastoris (Shepherd's purse) protein is Small ribosomal subunit protein uS8c (rps8).